The following is a 269-amino-acid chain: GTP cyclohydrolase FolE2 (269 aa).

The protein belongs to the GTP cyclohydrolase IV family.

It catalyses the reaction GTP + H2O = 7,8-dihydroneopterin 3'-triphosphate + formate + H(+). It functions in the pathway cofactor biosynthesis; 7,8-dihydroneopterin triphosphate biosynthesis; 7,8-dihydroneopterin triphosphate from GTP: step 1/1. Functionally, converts GTP to 7,8-dihydroneopterin triphosphate. This chain is GTP cyclohydrolase FolE2, found in Burkholderia multivorans (strain ATCC 17616 / 249).